The following is a 376-amino-acid chain: 1-acyl-sn-glycerol-3-phosphate acyltransferase gamma (376 aa).

Topologically, residues 1-124 (MGLLAFLKTQ…LGSSKVLAKK (124 aa)) are cytoplasmic. Residues 96 to 101 (HNFEID) carry the HXXXXD motif motif. A helical transmembrane segment spans residues 125-145 (ELLYVPLIGWTWYFLEIVFCK). At 146 to 316 (RKWEEDRDTV…TLLNFLSWAT (171 aa)) the chain is on the lumenal side. Residues 317 to 339 (ILLSPLFSFVLGVFASGSPLLIL) form a helical membrane-spanning segment. At 340–376 (TFLGFVGAASFGVRRLIGVTEIEKGSSYGNQEFKKKE) the chain is on the cytoplasmic side.

The protein belongs to the 1-acyl-sn-glycerol-3-phosphate acyltransferase family.

Its subcellular location is the endoplasmic reticulum membrane. The protein localises to the nucleus envelope. It catalyses the reaction a 1-acyl-sn-glycero-3-phosphate + an acyl-CoA = a 1,2-diacyl-sn-glycero-3-phosphate + CoA. It carries out the reaction pentadecanoyl-CoA + 1-(9Z-octadecenoyl)-sn-glycero-3-phosphate = 1-(9Z)-octadecenoyl-2-pentadecanoyl-sn-glycero-3-phosphate + CoA. The enzyme catalyses heptadecanoyl-CoA + 1-(9Z-octadecenoyl)-sn-glycero-3-phosphate = 1-(9Z)-octadecenoyl-2-heptadecanoyl-sn-glycero-3-phosphate + CoA. The catalysed reaction is 1-(9Z-octadecenoyl)-sn-glycero-3-phosphate + octadecanoyl-CoA = 1-(9Z-octadecenoyl)-2-octadecanoyl-sn-glycero-3-phosphate + CoA. It catalyses the reaction nonadecanoyl-CoA + 1-(9Z-octadecenoyl)-sn-glycero-3-phosphate = 1-(9Z)-octadecenoyl-2-nonadecanoyl-sn-glycero-3-phosphate + CoA. It carries out the reaction 1-(9Z-octadecenoyl)-sn-glycero-3-phosphate + (5Z,8Z,11Z,14Z)-eicosatetraenoyl-CoA = 1-(9Z)-octadecenoyl-2-(5Z,8Z,11Z,14Z)-eicosatetraenoyl-sn-glycero-3-phosphate + CoA. The enzyme catalyses 1-(9Z-octadecenoyl)-sn-glycero-3-phosphate + (9Z)-octadecenoyl-CoA = 1,2-di-(9Z-octadecenoyl)-sn-glycero-3-phosphate + CoA. The catalysed reaction is 1-(9Z-octadecenoyl)-sn-glycero-3-phosphate + (9Z,12Z)-octadecadienoyl-CoA = 1-(9Z)-octadecenoyl-2-(9Z,12Z)-octadecadienoyl-sn-glycero-3-phosphate + CoA. It catalyses the reaction 1-(9Z-octadecenoyl)-sn-glycero-3-phosphocholine + (5Z,8Z,11Z,14Z)-eicosatetraenoyl-CoA = 1-(9Z)-octadecenoyl-2-(5Z,8Z,11Z,14Z)-icosatetraenoyl-sn-glycero-3-phosphocholine + CoA. It carries out the reaction 1-(9Z-octadecenoyl)-sn-glycero-3-phospho-(1D-myo-inositol) + (5Z,8Z,11Z,14Z)-eicosatetraenoyl-CoA = 1-(9Z-octadecenoyl)-2-(5Z,8Z,11Z,14Z-eicosatetraenoyl)-sn-glycero-3-phospho-1D-myo-inositol + CoA. The enzyme catalyses 1-(9Z-octadecenoyl)-sn-glycero-3-phospho-L-serine + (5Z,8Z,11Z,14Z)-eicosatetraenoyl-CoA = 1-(9Z-octadecenoyl)-2-(5Z,8Z,11Z,14Z-eicosatetraenoyl)-sn-glycero-3-phospho-L-serine + CoA. The catalysed reaction is 1-hexadecanoyl-sn-glycero-3-phosphate + (9Z)-octadecenoyl-CoA = 1-hexadecanoyl-2-(9Z-octadecenoyl)-sn-glycero-3-phosphate + CoA. It catalyses the reaction 1-hexadecanoyl-sn-glycero-3-phosphate + (5Z,8Z,11Z,14Z)-eicosatetraenoyl-CoA = 1-hexadecanoyl-2-(5Z,8Z,11Z,14Z-eicosatetraenoyl)-sn-glycero-3-phosphate + CoA. It carries out the reaction 1-heptadecanoyl-sn-glycero-3-phosphate + (5Z,8Z,11Z,14Z)-eicosatetraenoyl-CoA = 1-heptadecanoyl-2-(5Z,8Z,11Z,14Z)-eicosatetraenoyl-sn-glycero-3-phosphate + CoA. The enzyme catalyses 1-octadecanoyl-sn-glycero-3-phosphate + (9Z)-octadecenoyl-CoA = 1-octadecanoyl-2-(9Z-octadecenoyl)-sn-glycero-3-phosphate + CoA. The catalysed reaction is 1-octadecanoyl-sn-glycero-3-phosphate + (5Z,8Z,11Z,14Z)-eicosatetraenoyl-CoA = 1-octadecanoyl-2-(5Z,8Z,11Z,14Z-eicosatetraenoyl)-sn-glycero-3-phosphate + CoA. It catalyses the reaction 1-(9Z-octadecenoyl)-sn-glycero-3-phosphate + hexadecanoyl-CoA = 1-hexadecanoyl-2-(9Z-octadecenoyl)-sn-glycero-3-phosphate + CoA. It carries out the reaction 1-O-(9Z-octadecenyl)-sn-glycero-3-phosphate + (5Z,8Z,11Z,14Z)-eicosatetraenoyl-CoA = 1-O-(9Z-octadecenyl)-2-(5Z,8Z,11Z,14Z-eicosatetraenoyl)-sn-glycero-3-phosphate + CoA. The enzyme catalyses a 1-acyl-sn-glycero-3-phospho-(1D-myo-inositol) + (5Z,8Z,11Z,14Z)-eicosatetraenoyl-CoA = a 1-acyl-2-(5Z,8Z,11Z,14Z-eicosatetraenoyl)-sn-glycero-3-phospho-(1D-myo-inositol) + CoA. It functions in the pathway phospholipid metabolism; CDP-diacylglycerol biosynthesis; CDP-diacylglycerol from sn-glycerol 3-phosphate: step 2/3. In terms of biological role, converts 1-acyl-sn-glycerol-3-phosphate (lysophosphatidic acid or LPA) into 1,2-diacyl-sn-glycerol-3-phosphate (phosphatidic acid or PA) by incorporating an acyl moiety at the sn-2 position of the glycerol backbone. Acts on LPA containing saturated or unsaturated fatty acids C16:0-C20:4 at the sn-1 position using C18:1, C20:4 or C18:2-CoA as the acyl donor. Also acts on lysophosphatidylcholine, lysophosphatidylinositol and lysophosphatidylserine using C18:1 or C20:4-CoA. Has a preference for arachidonoyl-CoA as a donor. Also has a modest lysophosphatidylinositol acyltransferase (LPIAT) activity, converts lysophosphatidylinositol (LPI) into phosphatidylinositol. The protein is 1-acyl-sn-glycerol-3-phosphate acyltransferase gamma (AGPAT3) of Pongo abelii (Sumatran orangutan).